Here is a 1084-residue protein sequence, read N- to C-terminus: Transcription elongation factor SPT5 (1084 aa).

The segment at 1–91 is disordered; sequence MSDSEDSDFS…DDEYEDEDPW (91 aa). Acidic residues-rich tracts occupy residues 20 to 32, 41 to 62, and 77 to 91; these read AEEV…EEEQ, AEEE…EEDD, and DEAD…EDPW. Residues 175 to 269 are interaction with SUPT4H1; that stretch reads DPNLWTVKCK…TDVLKVVKEV (95 aa). 4 consecutive KOW domains span residues 272–305, 419–450, 471–502, and 593–626; these read LKPK…ISLK, LQAG…ITIM, FRMG…VILF, and IHVK…LHCK. Residues 312–419 form an interaction with RNA polymerase II region; it reads LDRIKARMSM…TTGKEREHNL (108 aa). Phosphoserine is present on S665. The interval 667 to 700 is disordered; that stretch reads RISSPMHPGGGGQPQRGGGGGGGGGMGRGRGRRD. Gly residues predominate over residues 674–694; sequence PGGGGQPQRGGGGGGGGGMGR. One can recognise a KOW 5 domain in the interval 702–735; that stretch reads DLIGQTVRISQGPYKGYIGVVKDATESTARVELH. The segment at 748–973 is disordered; it reads LTTVGGKERQ…HTPGSNIDQA (226 aa). The stretch at 758–763 is one CTR1-1; approximate repeat; it reads GRSSTH. Positions 758–815 are 8 X 7 AA approximate tandem repeats of G-S-[QR]-T-P-X-[YQ], motif CTR1; sequence GRSSTHLRTPMYGSQTPIYGTGSRTPMYGSQTPLHDGSRTPHYGSQTPLHDGSRTPGQ. The segment covering 759 to 790 has biased composition (polar residues); that stretch reads RSSTHLRTPMYGSQTPIYGTGSRTPMYGSQTP. The CTR1-2; approximate repeat unit spans residues 764–769; it reads LRTPMY. Residues 770–776 form a CTR1-3 repeat; it reads GSQTPIY. A phosphothreonine; by CDK9 mark is found at T773 and T782. A CTR1-4 repeat occupies 779-785; the sequence is GSRTPMY. The stretch at 786 to 792 is one CTR1-5 repeat; sequence GSQTPLH. The CTR1-6 repeat unit spans residues 794–800; it reads GSRTPHY. The CTR1-7 repeat unit spans residues 801 to 807; that stretch reads GSQTPLH. Residues 809–815 form a CTR1-8 repeat; sequence GSRTPGQ. A compositionally biased stretch (acidic residues) spans 832–842; sequence DEYEFAYDDEP. A CTR2-1 repeat occupies 842–849; sequence PSPSPQGY. The tract at residues 842–948 is 10 X 8 AA approximate tandem repeats of P-[TS]-P-S-P-[QA]-[SG]-Y, motif CTR2; that stretch reads PSPSPQGYGG…ASPSPSPVGY (107 aa). One copy of the CTR2-2; approximate repeat lies at 852-860; the sequence is TPNPQTPGY. Positions 855-864 are enriched in pro residues; sequence PQTPGYPEVP. One copy of the CTR2-3; approximate repeat lies at 861–867; that stretch reads PEVPSPQ. A compositionally biased stretch (polar residues) spans 866 to 888; it reads PQVNPQYNPQTPGTPAMYNTDQY. Residues 879–883 form a CTR2-4; half-length repeat; that stretch reads TPAMY. One copy of the CTR2-5; approximate repeat lies at 894-900; the sequence is PSPQGSY. A compositionally biased stretch (low complexity) spans 894–909; that stretch reads PSPQGSYQPSPSPQSY. The CTR2-6 repeat unit spans residues 902-909; sequence PSPSPQSY. One copy of the CTR2-7; approximate repeat lies at 914–919; the sequence is PSPVGY. A CTR2-8 repeat occupies 922–928; that stretch reads THSPASY. Residues 930–937 form a CTR2-9 repeat; that stretch reads PTPSPMAY. A CTR2-10 repeat occupies 941–948; the sequence is PSPSPVGY.

It belongs to the SPT5 family. In terms of assembly, interacts with SUPT4H1 to form the DSIF complex. DSIF interacts with RNA polymerase II and with the positive transcription elongation factor b complex (P-TEFb complex), which is composed of CDK9 and cyclin-T. Post-translationally, phosphorylated. Phosphorylation by P-TEFb (CDK9) at Thr residues of the C-terminal repeats alleviates transcriptional pausing and promotes transcription elongation.

The protein resides in the nucleus. Functionally, component of the DRB sensitivity-inducing factor complex (DSIF complex), which regulates mRNA processing and transcription elongation by RNA polymerase II. DSIF positively regulates mRNA capping by stimulating the mRNA guanylyltransferase activity of RNGTT/CAP1A. DSIF also acts cooperatively with the negative elongation factor complex (NELF complex) to enhance transcriptional pausing at sites proximal to the promoter. Transcriptional pausing may facilitate the assembly of an elongation competent RNA polymerase II complex. DSIF and NELF promote pausing by inhibition of the transcription elongation factor TFIIS/S-II. TFIIS/S-II binds to RNA polymerase II at transcription pause sites and stimulates the weak intrinsic nuclease activity of the enzyme. Cleavage of blocked transcripts by RNA polymerase II promotes the resumption of transcription from the new 3' terminus and may allow repeated attempts at transcription through natural pause sites. Following phosphorylation by CDK9, DSIF can also positively regulate transcriptional elongation. Regulation of transcriptional elongation by this protein is required for the expression of genes which control neuronal development. This chain is Transcription elongation factor SPT5 (supt5h), found in Danio rerio (Zebrafish).